Consider the following 350-residue polypeptide: Histidinol-phosphate aminotransferase 2 (350 aa).

Position 210 is an N6-(pyridoxal phosphate)lysine (lysine 210).

This sequence belongs to the class-II pyridoxal-phosphate-dependent aminotransferase family. Histidinol-phosphate aminotransferase subfamily. In terms of assembly, homodimer. Requires pyridoxal 5'-phosphate as cofactor.

The enzyme catalyses L-histidinol phosphate + 2-oxoglutarate = 3-(imidazol-4-yl)-2-oxopropyl phosphate + L-glutamate. It participates in amino-acid biosynthesis; L-histidine biosynthesis; L-histidine from 5-phospho-alpha-D-ribose 1-diphosphate: step 7/9. The polypeptide is Histidinol-phosphate aminotransferase 2 (Mannheimia succiniciproducens (strain KCTC 0769BP / MBEL55E)).